Here is a 406-residue protein sequence, read N- to C-terminus: UPF0761 membrane protein NMB0524 (406 aa).

The next 6 membrane-spanning stretches (helical) occupy residues 43–63 (LLALVPVLTVMVAVASIFPVF), 100–120 (LTAIGSVMLVVTSLMLIRTID), 139–159 (FLVYWALLTFGPLSLGVGISF), 176–196 (WSGALRTAATLTFMTLLLWGL), 210–230 (AFVGALATAFCLETARSLFTW), and 248–268 (VPFFLLWLNLLWTLVLGGAVL).

The protein belongs to the UPF0761 family.

Its subcellular location is the cell inner membrane. The polypeptide is UPF0761 membrane protein NMB0524 (Neisseria meningitidis serogroup B (strain ATCC BAA-335 / MC58)).